Reading from the N-terminus, the 182-residue chain is Orotate phosphoribosyltransferase (182 aa).

5-phospho-alpha-D-ribose 1-diphosphate is bound by residues Arg-91, Lys-92, Lys-95, His-97, and 117 to 125 (EDVTTTGGS). Orotate-binding residues include Thr-121 and Arg-149.

This sequence belongs to the purine/pyrimidine phosphoribosyltransferase family. PyrE subfamily. In terms of assembly, homodimer. The cofactor is Mg(2+).

The catalysed reaction is orotidine 5'-phosphate + diphosphate = orotate + 5-phospho-alpha-D-ribose 1-diphosphate. It participates in pyrimidine metabolism; UMP biosynthesis via de novo pathway; UMP from orotate: step 1/2. In terms of biological role, catalyzes the transfer of a ribosyl phosphate group from 5-phosphoribose 1-diphosphate to orotate, leading to the formation of orotidine monophosphate (OMP). In Pyrococcus furiosus (strain ATCC 43587 / DSM 3638 / JCM 8422 / Vc1), this protein is Orotate phosphoribosyltransferase.